An 85-amino-acid chain; its full sequence is LYR motif-containing protein 5A (85 aa).

The protein belongs to the complex I LYR family.

The polypeptide is LYR motif-containing protein 5A (lyrm5a) (Danio rerio (Zebrafish)).